The following is a 371-amino-acid chain: 4-hydroxy-3-methylbut-2-en-1-yl diphosphate synthase (flavodoxin) (371 aa).

Residues Cys270, Cys273, Cys305, and Glu312 each coordinate [4Fe-4S] cluster.

The protein belongs to the IspG family. It depends on [4Fe-4S] cluster as a cofactor.

It carries out the reaction (2E)-4-hydroxy-3-methylbut-2-enyl diphosphate + oxidized [flavodoxin] + H2O + 2 H(+) = 2-C-methyl-D-erythritol 2,4-cyclic diphosphate + reduced [flavodoxin]. Its pathway is isoprenoid biosynthesis; isopentenyl diphosphate biosynthesis via DXP pathway; isopentenyl diphosphate from 1-deoxy-D-xylulose 5-phosphate: step 5/6. Converts 2C-methyl-D-erythritol 2,4-cyclodiphosphate (ME-2,4cPP) into 1-hydroxy-2-methyl-2-(E)-butenyl 4-diphosphate. The sequence is that of 4-hydroxy-3-methylbut-2-en-1-yl diphosphate synthase (flavodoxin) from Shewanella loihica (strain ATCC BAA-1088 / PV-4).